The following is a 613-amino-acid chain: Laccase 1 (613 aa).

Residues 1–20 form the signal peptide; sequence MSRFARLLLIVALFFTNAWA. Plastocyanin-like domains follow at residues 29-142 and 171-359; these read ITWK…IRPK and YLVV…MRIP. The N-linked (GlcNAc...) asparagine glycan is linked to asparagine 74. 4 residues coordinate Cu cation: histidine 78, histidine 80, histidine 122, and histidine 124. N-linked (GlcNAc...) asparagine glycosylation is found at asparagine 256, asparagine 279, asparagine 444, asparagine 468, and asparagine 484. In terms of domain architecture, Plastocyanin-like 3 spans 468 to 598; it reads NATRDTENDG…GGMGIAILDG (131 aa). Residues histidine 506, histidine 509, and histidine 511 each coordinate Cu cation. Asparagine 526 carries an N-linked (GlcNAc...) asparagine glycan. Cu cation is bound by residues histidine 580, cysteine 581, histidine 582, and histidine 586.

Belongs to the multicopper oxidase family. Cu cation is required as a cofactor.

The protein resides in the cell surface. It participates in pigment biosynthesis. Laccase; part of the Pks1 gene cluster that mediates the biosynthesis of an anthraquinone derivative pigment that contributes to conidial pigmentation that provides protection from UV radiation, heat and cold stress. The polyketide synthase Pks1 produces 1-acetyl-2,4,6,8-tetrahydroxy-9,10-anthraquinone though condensation of acetyl-CoA with malonyl-CoA. The dehydratase EthD and the laccase Mlac1 further convert the anthraquinone derivative into the final conidial pigment. The protein is Laccase 1 of Metarhizium robertsii (strain ARSEF 23 / ATCC MYA-3075) (Metarhizium anisopliae (strain ARSEF 23)).